We begin with the raw amino-acid sequence, 201 residues long: Protein GrpE (201 aa).

The tract at residues 1–32 (MTDRDRQPEDTTAPTGEPVVSKPYIMPDDPEP) is disordered.

This sequence belongs to the GrpE family. As to quaternary structure, homodimer.

The protein localises to the cytoplasm. Functionally, participates actively in the response to hyperosmotic and heat shock by preventing the aggregation of stress-denatured proteins, in association with DnaK and GrpE. It is the nucleotide exchange factor for DnaK and may function as a thermosensor. Unfolded proteins bind initially to DnaJ; upon interaction with the DnaJ-bound protein, DnaK hydrolyzes its bound ATP, resulting in the formation of a stable complex. GrpE releases ADP from DnaK; ATP binding to DnaK triggers the release of the substrate protein, thus completing the reaction cycle. Several rounds of ATP-dependent interactions between DnaJ, DnaK and GrpE are required for fully efficient folding. In Bradyrhizobium diazoefficiens (strain JCM 10833 / BCRC 13528 / IAM 13628 / NBRC 14792 / USDA 110), this protein is Protein GrpE.